Reading from the N-terminus, the 80-residue chain is RNA-binding protein Hfq (80 aa).

Residues 10–70 enclose the Sm domain; the sequence is DIFLNQVRKE…ISTISPMKSV (61 aa).

Belongs to the Hfq family. Homohexamer.

RNA chaperone that binds small regulatory RNA (sRNAs) and mRNAs to facilitate mRNA translational regulation in response to envelope stress, environmental stress and changes in metabolite concentrations. Also binds with high specificity to tRNAs. This chain is RNA-binding protein Hfq, found in Ruminiclostridium cellulolyticum (strain ATCC 35319 / DSM 5812 / JCM 6584 / H10) (Clostridium cellulolyticum).